The sequence spans 1067 residues: DNA-directed RNA polymerase subunit beta (1067 aa).

It belongs to the RNA polymerase beta chain family. As to quaternary structure, in plastids the minimal PEP RNA polymerase catalytic core is composed of four subunits: alpha, beta, beta', and beta''. When a (nuclear-encoded) sigma factor is associated with the core the holoenzyme is formed, which can initiate transcription.

It localises to the plastid. The protein localises to the chloroplast. The catalysed reaction is RNA(n) + a ribonucleoside 5'-triphosphate = RNA(n+1) + diphosphate. Functionally, DNA-dependent RNA polymerase catalyzes the transcription of DNA into RNA using the four ribonucleoside triphosphates as substrates. The polypeptide is DNA-directed RNA polymerase subunit beta (Ipomoea purpurea (Common morning glory)).